Consider the following 148-residue polypeptide: FAD synthase (148 aa).

ATP contacts are provided by residues 14–15, 19–22, and aspartate 100; these read VF and HVGH.

It belongs to the archaeal FAD synthase family. Homodimer. Requires a divalent metal cation as cofactor.

It carries out the reaction FMN + ATP + H(+) = FAD + diphosphate. It functions in the pathway cofactor biosynthesis; FAD biosynthesis; FAD from FMN: step 1/1. Its function is as follows. Catalyzes the transfer of the AMP portion of ATP to flavin mononucleotide (FMN) to produce flavin adenine dinucleotide (FAD) coenzyme. This chain is FAD synthase, found in Thermococcus sibiricus (strain DSM 12597 / MM 739).